The sequence spans 346 residues: GTPase Obg (346 aa).

An Obg domain is found at 1 to 159 (MRFVDRCRLK…RELRLELKVL (159 aa)). A disordered region spans residues 122–147 (KGGRGNLHFKSPHDRAPRRAEPGEPG). The span at 132-147 (SPHDRAPRRAEPGEPG) shows a compositional bias: basic and acidic residues. One can recognise an OBG-type G domain in the interval 160–336 (ADVGLLGFPN…LVRELAALAR (177 aa)). GTP is bound by residues 166–173 (GFPNAGKS), 191–195 (FTTLT), 218–221 (DIPG), 288–291 (TKAD), and 317–319 (SAA). Mg(2+) is bound by residues Ser-173 and Thr-193.

The protein belongs to the TRAFAC class OBG-HflX-like GTPase superfamily. OBG GTPase family. In terms of assembly, monomer. The cofactor is Mg(2+).

Its subcellular location is the cytoplasm. In terms of biological role, an essential GTPase which binds GTP, GDP and possibly (p)ppGpp with moderate affinity, with high nucleotide exchange rates and a fairly low GTP hydrolysis rate. Plays a role in control of the cell cycle, stress response, ribosome biogenesis and in those bacteria that undergo differentiation, in morphogenesis control. This is GTPase Obg from Sorangium cellulosum (strain So ce56) (Polyangium cellulosum (strain So ce56)).